Reading from the N-terminus, the 162-residue chain is Small ribosomal subunit protein uS5 (162 aa).

The 64-residue stretch at 11–74 folds into the S5 DRBM domain; the sequence is LTDRVVHISR…EQAKKNLIKV (64 aa).

Belongs to the universal ribosomal protein uS5 family. As to quaternary structure, part of the 30S ribosomal subunit. Contacts proteins S4 and S8.

Its function is as follows. With S4 and S12 plays an important role in translational accuracy. In terms of biological role, located at the back of the 30S subunit body where it stabilizes the conformation of the head with respect to the body. This Pelobacter propionicus (strain DSM 2379 / NBRC 103807 / OttBd1) protein is Small ribosomal subunit protein uS5.